The primary structure comprises 501 residues: Cytochrome P450 2J6 (501 aa).

C447 is a heme binding site.

The protein belongs to the cytochrome P450 family. The cofactor is heme.

The protein localises to the endoplasmic reticulum membrane. Its subcellular location is the microsome membrane. The catalysed reaction is an organic molecule + reduced [NADPH--hemoprotein reductase] + O2 = an alcohol + oxidized [NADPH--hemoprotein reductase] + H2O + H(+). In Mus musculus (Mouse), this protein is Cytochrome P450 2J6 (Cyp2j6).